A 520-amino-acid chain; its full sequence is Lysine--tRNA ligase (520 aa).

The segment at 1-21 (MSDHLIPSIPTPAAAPAAAPA) is disordered. Residues 12-21 (PAAAPAAAPA) are compositionally biased toward low complexity. Residues E430 and E437 each coordinate Mg(2+).

This sequence belongs to the class-II aminoacyl-tRNA synthetase family. As to quaternary structure, homodimer. Mg(2+) serves as cofactor.

It localises to the cytoplasm. It carries out the reaction tRNA(Lys) + L-lysine + ATP = L-lysyl-tRNA(Lys) + AMP + diphosphate. The sequence is that of Lysine--tRNA ligase from Variovorax paradoxus (strain S110).